Reading from the N-terminus, the 251-residue chain is Ubiquitin-conjugating enzyme E2 22 (251 aa).

Residues 10 to 156 (NVIKQLAKEL…ARLYTGIHAK (147 aa)) enclose the UBC core domain. Residue Cys94 is the Glycyl thioester intermediate of the active site. Positions 230-240 (GLAKVQADKKK) are enriched in basic and acidic residues. The segment at 230–251 (GLAKVQADKKKVDARKKSLKRL) is disordered. Residues 230–251 (GLAKVQADKKKVDARKKSLKRL) are a coiled coil. Basic residues predominate over residues 241–251 (VDARKKSLKRL).

Belongs to the ubiquitin-conjugating enzyme family. Self-ubiquitinated. As to expression, expressed in seeds, pistils, siliques, hypocotyls and leaves.

The catalysed reaction is S-ubiquitinyl-[E1 ubiquitin-activating enzyme]-L-cysteine + [E2 ubiquitin-conjugating enzyme]-L-cysteine = [E1 ubiquitin-activating enzyme]-L-cysteine + S-ubiquitinyl-[E2 ubiquitin-conjugating enzyme]-L-cysteine.. The protein operates within protein modification; protein ubiquitination. In terms of biological role, accepts the ubiquitin from the E1 complex and catalyzes its covalent attachment to other proteins. The polypeptide is Ubiquitin-conjugating enzyme E2 22 (UBC22) (Arabidopsis thaliana (Mouse-ear cress)).